A 359-amino-acid chain; its full sequence is Protein Wnt-5b (359 aa).

The first 17 residues, 1–17, serve as a signal peptide directing secretion; the sequence is MPSLLLLFTAALLSSWA. A disulfide bridge links cysteine 83 with cysteine 94. Asparagine 93 and asparagine 99 each carry an N-linked (GlcNAc...) asparagine glycan. 10 disulfides stabilise this stretch: cysteine 133/cysteine 141, cysteine 143/cysteine 161, cysteine 217/cysteine 231, cysteine 219/cysteine 226, cysteine 288/cysteine 319, cysteine 304/cysteine 314, cysteine 318/cysteine 358, cysteine 334/cysteine 349, cysteine 336/cysteine 346, and cysteine 341/cysteine 342. Residue serine 223 is the site of O-palmitoleoyl serine; by PORCN attachment. 2 N-linked (GlcNAc...) asparagine glycosylation sites follow: asparagine 291 and asparagine 305.

Belongs to the Wnt family. In terms of assembly, interacts with PORCN. Post-translationally, palmitoleoylation is required for efficient binding to frizzled receptors. Depalmitoleoylation leads to Wnt signaling pathway inhibition.

It is found in the secreted. The protein resides in the extracellular space. It localises to the extracellular matrix. Its function is as follows. Ligand for members of the frizzled family of seven transmembrane receptors. Probable developmental protein. May be a signaling molecule which affects the development of discrete regions of tissues. Is likely to signal over only few cell diameters. This is Protein Wnt-5b (WNT5B) from Pongo abelii (Sumatran orangutan).